The sequence spans 261 residues: Pantothenate synthetase (261 aa).

Methionine 29 to histidine 36 contacts ATP. Histidine 36 acts as the Proton donor in catalysis. A (R)-pantoate-binding site is contributed by glutamine 60. Glutamine 60 contributes to the beta-alanine binding site. Glycine 147–aspartate 150 is an ATP binding site. Glutamine 153 is a (R)-pantoate binding site. Leucine 184–arginine 187 contributes to the ATP binding site.

It belongs to the pantothenate synthetase family. Homodimer.

It localises to the cytoplasm. It catalyses the reaction (R)-pantoate + beta-alanine + ATP = (R)-pantothenate + AMP + diphosphate + H(+). Its pathway is cofactor biosynthesis; (R)-pantothenate biosynthesis; (R)-pantothenate from (R)-pantoate and beta-alanine: step 1/1. Catalyzes the condensation of pantoate with beta-alanine in an ATP-dependent reaction via a pantoyl-adenylate intermediate. The protein is Pantothenate synthetase of Francisella tularensis subsp. novicida (strain U112).